Here is a 631-residue protein sequence, read N- to C-terminus: ATP-dependent protease PrkA (631 aa).

Residue Thr217 is modified to Phosphothreonine. Residue Ser219 is modified to Phosphoserine.

The protein belongs to the PrkA family. Phosphorylated by PrkC on two sites, Thr-217 and Ser-219, with the threonine being the major site of modification.

It localises to the forespore. The protein resides in the spore coat. The enzyme catalyses Hydrolysis of proteins in presence of ATP.. Its activity is regulated as follows. Hydrolase activity is regulated by phosphorylation by the Ser/Thr kinase PrkC, probably allowing fine control of sporulation. Phosphorylation by PrkC does not prevent ATP fixation but it inhibits specifically PrkA protease activity and down-regulates the sporulation processes. Hydrolase activity is inhibited by a protease inhibitor, phenylmethylsulfonyl fluoride (PMSF). Potential kinase activity requires the presence of MgCl(2) and is inhibited in the presence of MnCl(2). In terms of biological role, ATP-dependent protease that regulates sporulation. Is able to bind and hydrolyze ATP. This ATP-dependent protease activity is necessary for efficient sporulation of B.subtilis. In vitro, can hydrolyze alpha-casein, an exogenous substrate of Lon proteases, in an ATP-dependent manner. PrkA also modulates sporulation by negatively regulating the transcriptional regulator Hpr/ScoC to induce the expression of sigK. The control of sporulation mediated via the Hpr/ScoC regulator is probably indirect. PrkA was originally thought to be a protein kinase, as it has been shown to phosphorylate in vitro an unidentified 60 kDa protein from B.subtilis crude extracts at a serine residue. However, Zhang et al. did not observe autophosphorylation or kinase activity for this protein, suggesting that it may have lost its kinase activity during evolution or may be a pseudokinase. In Bacillus subtilis (strain 168), this protein is ATP-dependent protease PrkA.